Here is a 294-residue protein sequence, read N- to C-terminus: Epimerase family protein SDR39U1 (294 aa).

Residues 31–32 (SR), 58–59 (LA), E77, R82, and V160 contribute to the NADP(+) site.

It belongs to the NAD(P)-dependent epimerase/dehydratase family. SDR39U1 subfamily.

Putative NADP-dependent oxidoreductase. The protein is Epimerase family protein SDR39U1 (SDR39U1) of Bos taurus (Bovine).